A 631-amino-acid polypeptide reads, in one-letter code: Tumor protein p73 (631 aa).

The interval 1 to 43 (MAQTSSSSSSTFEHLWSSLEPDSTYFDLPQPSQGTSEASGSEE) is transactivation. Disordered stretches follow at residues 23-43 (STYFDLPQPSQGTSEASGSEE) and 69-113 (SRAA…NTDY). T24 bears the Phosphothreonine; by PLK1 mark. Y25 is subject to Phosphotyrosine; by SRC and HCK. 2 stretches are compositionally biased toward polar residues: residues 30-43 (QPSQGTSEASGSEE) and 86-100 (PTHSPYAQPSSTFDT). Y91 carries the phosphotyrosine; by ABL1 modification. Residues 123–302 (FQQSSTAKSA…DRKADEDHYR (180 aa)) form a DNA-binding region. Zn(2+) contacts are provided by C186, H189, C250, and C254. Polar residues predominate over residues 306-315 (ALNESTTKNG). Residues 306 to 334 (ALNESTTKNGAASKRAFKQSPPAIPALGT) form a disordered region. The interaction with HIPK2 stretch occupies residues 337–372 (KKRRHGDEDMFYMHVRGRENFEILMKVKESLELMEL). Positions 337-378 (KKRRHGDEDMFYMHVRGRENFEILMKVKESLELMELVPQPLV) are oligomerization. Positions 477-481 (PPPPY) match the PPxY motif motif. Positions 479-545 (PPYHADPSLV…WRGLQDLKQS (67 aa)) constitute an SAM domain. K622 is covalently cross-linked (Glycyl lysine isopeptide (Lys-Gly) (interchain with G-Cter in SUMO); alternate). Residue K622 forms a Glycyl lysine isopeptide (Lys-Gly) (interchain with G-Cter in SUMO2); alternate linkage.

Belongs to the p53 family. As to quaternary structure, found in a complex with p53/TP53 and CABLES1. The C-terminal oligomerization domain binds to the ABL1 tyrosine kinase SH3 domain. Interacts with HECW2, HIPK2, RANBP9 and WWOX. Interacts (via SAM domain) with FBXO45 (via B30.2/SPRY domain). Interacts with YAP1 (phosphorylated form). Interacts with HCK (via SH3 domain); this inhibits TP73 activity and degradation. Interacts (via SAM domain) with NQO1; this interaction is NADH-dependent, stabilizes TP73 in response to oxidative stress and protects it from ubiquitin-independent degradation by the 20S proteasome. The cofactor is Zn(2+). Post-translationally, sumoylated on Lys-622, which potentiates proteasomal degradation but does not affect transcriptional activity. In terms of processing, phosphorylation by PLK1 and PLK3 inhibits the transcription regulator activity and pro-apoptotic function. Higher levels of phosphorylation seen in striatal neurons of. mutant huntingtin (htt) transgenic mice. Polyubiquitinated by RCHY1/PIRH2; leading to its degradation by the proteasome. Found in striatal neurons of mutant huntingtin (htt) transgenic mice (at protein level). Isoform 1 is expressed in the nasal epithelium, the vomeronasal organ, the hippocampus and the hypothalamus.

Its subcellular location is the nucleus. The protein resides in the cytoplasm. Functionally, participates in the apoptotic response to DNA damage. Isoforms containing the transactivation domain are pro-apoptotic, isoforms lacking the domain are anti-apoptotic and block the function of p53 and transactivating p73 isoforms. May be a tumor suppressor protein. Is an activator of FOXJ1 expression, essential for the positive regulation of lung ciliated cell differentiation. The polypeptide is Tumor protein p73 (Tp73) (Mus musculus (Mouse)).